Here is a 464-residue protein sequence, read N- to C-terminus: Glutamate--tRNA ligase (464 aa).

The 'HIGH' region signature appears at 9 to 19 (PSPTGYLHIGG). The 'KMSKS' region signature appears at 242–246 (KISKR). ATP is bound at residue lysine 245.

It belongs to the class-I aminoacyl-tRNA synthetase family. Glutamate--tRNA ligase type 1 subfamily. As to quaternary structure, monomer.

The protein localises to the cytoplasm. It catalyses the reaction tRNA(Glu) + L-glutamate + ATP = L-glutamyl-tRNA(Glu) + AMP + diphosphate. Functionally, catalyzes the attachment of glutamate to tRNA(Glu) in a two-step reaction: glutamate is first activated by ATP to form Glu-AMP and then transferred to the acceptor end of tRNA(Glu). In Neisseria meningitidis serogroup C (strain 053442), this protein is Glutamate--tRNA ligase.